The primary structure comprises 353 residues: Quinolinate synthase (353 aa).

Iminosuccinate is bound by residues histidine 47 and serine 68. Cysteine 113 provides a ligand contact to [4Fe-4S] cluster. Iminosuccinate is bound by residues 139–141 (YAN) and serine 156. [4Fe-4S] cluster is bound at residue cysteine 200. Iminosuccinate is bound by residues 226 to 228 (HPE) and threonine 243. Cysteine 297 is a binding site for [4Fe-4S] cluster.

Belongs to the quinolinate synthase family. Type 1 subfamily. [4Fe-4S] cluster serves as cofactor.

It is found in the cytoplasm. It carries out the reaction iminosuccinate + dihydroxyacetone phosphate = quinolinate + phosphate + 2 H2O + H(+). Its pathway is cofactor biosynthesis; NAD(+) biosynthesis; quinolinate from iminoaspartate: step 1/1. In terms of biological role, catalyzes the condensation of iminoaspartate with dihydroxyacetone phosphate to form quinolinate. The polypeptide is Quinolinate synthase (Photobacterium profundum (strain SS9)).